A 94-amino-acid polypeptide reads, in one-letter code: Pyrimidine/purine nucleoside phosphorylase (94 aa).

This sequence belongs to the nucleoside phosphorylase PpnP family.

It catalyses the reaction a purine D-ribonucleoside + phosphate = a purine nucleobase + alpha-D-ribose 1-phosphate. The catalysed reaction is adenosine + phosphate = alpha-D-ribose 1-phosphate + adenine. It carries out the reaction cytidine + phosphate = cytosine + alpha-D-ribose 1-phosphate. The enzyme catalyses guanosine + phosphate = alpha-D-ribose 1-phosphate + guanine. It catalyses the reaction inosine + phosphate = alpha-D-ribose 1-phosphate + hypoxanthine. The catalysed reaction is thymidine + phosphate = 2-deoxy-alpha-D-ribose 1-phosphate + thymine. It carries out the reaction uridine + phosphate = alpha-D-ribose 1-phosphate + uracil. The enzyme catalyses xanthosine + phosphate = alpha-D-ribose 1-phosphate + xanthine. Functionally, catalyzes the phosphorolysis of diverse nucleosides, yielding D-ribose 1-phosphate and the respective free bases. Can use uridine, adenosine, guanosine, cytidine, thymidine, inosine and xanthosine as substrates. Also catalyzes the reverse reactions. This chain is Pyrimidine/purine nucleoside phosphorylase, found in Salmonella agona (strain SL483).